Consider the following 686-residue polypeptide: DNA ligase (686 aa).

NAD(+)-binding positions include 31–35 (DSEYD), 80–81 (SL), and Glu-109. Catalysis depends on Lys-111, which acts as the N6-AMP-lysine intermediate. Residues Arg-132, Glu-166, Lys-280, and Lys-304 each contribute to the NAD(+) site. Residues Cys-430, Cys-433, Cys-448, and Cys-453 each contribute to the Zn(2+) site. One can recognise a BRCT domain in the interval 611–686 (NVEGILSGKT…IWSEQDLLDL (76 aa)).

This sequence belongs to the NAD-dependent DNA ligase family. LigA subfamily. It depends on Mg(2+) as a cofactor. Requires Mn(2+) as cofactor.

The enzyme catalyses NAD(+) + (deoxyribonucleotide)n-3'-hydroxyl + 5'-phospho-(deoxyribonucleotide)m = (deoxyribonucleotide)n+m + AMP + beta-nicotinamide D-nucleotide.. Its function is as follows. DNA ligase that catalyzes the formation of phosphodiester linkages between 5'-phosphoryl and 3'-hydroxyl groups in double-stranded DNA using NAD as a coenzyme and as the energy source for the reaction. It is essential for DNA replication and repair of damaged DNA. The sequence is that of DNA ligase from Lactococcus lactis subsp. cremoris (strain SK11).